The sequence spans 1159 residues: WASH complex subunit 5 (1159 aa).

It belongs to the strumpellin family. As to quaternary structure, component of the WASH complex.

It localises to the early endosome. Its function is as follows. Acts at least in part as component of the WASH complex which seems to regulate washc1 nucleation-promoting factor (NPF) activity and is required for its membrane targeting during endosomal sorting. The chain is WASH complex subunit 5 from Xenopus tropicalis (Western clawed frog).